Consider the following 514-residue polypeptide: 1-pyrroline-5-carboxylate dehydrogenase (514 aa).

Catalysis depends on residues E286 and C320.

The protein belongs to the aldehyde dehydrogenase family. RocA subfamily.

It catalyses the reaction L-glutamate 5-semialdehyde + NAD(+) + H2O = L-glutamate + NADH + 2 H(+). Its pathway is amino-acid degradation; L-proline degradation into L-glutamate; L-glutamate from L-proline: step 2/2. The sequence is that of 1-pyrroline-5-carboxylate dehydrogenase from Staphylococcus aureus (strain MRSA252).